Consider the following 144-residue polypeptide: Maximins 3/H11 type 1 (144 aa).

A signal peptide spans 1–18 (MNFKYIVAVSFLIASAYA). 2 propeptides span residues 19–43 (RSVQ…REIR) and 73–122 (RTAE…KKEK). I143 carries the isoleucine amide modification.

This sequence belongs to the bombinin family. Expressed by the skin glands.

The protein resides in the secreted. Functionally, maximin-3 shows antibacterial activity against both Gram-positive and Gram-negative bacteria. It also shows antimicrobial activity against the fungus C.albicans, but not against A.flavus nor P.uticale. It has little hemolytic activity. It possess a significant cytotoxicity against tumor cell lines. It possess a significant anti-HIV activity. It shows high spermicidal activity. Its function is as follows. Maximin-H11 shows antimicrobial activity against bacteria and against the fungus C.albicans. Shows strong hemolytic activity. This is Maximins 3/H11 type 1 from Bombina maxima (Giant fire-bellied toad).